A 280-amino-acid polypeptide reads, in one-letter code: uncharacterized protein (280 aa).

Composition is skewed to basic and acidic residues over residues 110–122 (EKQA…ERLQ), 167–177 (ATGEERAECGR), 223–261 (ARQH…RPQQ), and 269–280 (DVDRSKSCLEAE). Disordered stretches follow at residues 110-137 (EKQA…KTEH), 151-177 (HRGE…ECGR), and 219-280 (TIID…LEAE).

This is an uncharacterized protein from Agrobacterium vitis (Rhizobium vitis).